Consider the following 396-residue polypeptide: MALKKRSKHSKKFKLNLGPQHPATHGVLRLILEMDGEIVERADPHIGLLHRGTEKLIEYKTYLQAIPYFDRLDYVSPMCQEHAFALAIEHLLKCEVPLRAQYIRVMFSELTRILNHTLNIATQALDVGATTPLLWMFEEREKIMEFYERVSGSRLHANYFRPGGVAQDLPEGLIENIVDFCEQFPCKIADLETLLTDNRIWKQRTVDIGIVSKQQAMDWGFSGVMLRGSGIAWDLRKSQPYDQYANLDFDVAIGKNGDCYDRYLIRIEEMYQSIKIIKQCIQKMPVGEIKTQDPSISPPKRSEIKKSMEALINHFKLYSEGYNVPAGEVYAAVEAPKGEFGVYLYSDGTNRPYRCRIKAPGFAHLQGLDFMARGHSLSDIITIIATLDIVFGEIDR.

The protein belongs to the complex I 49 kDa subunit family. As to quaternary structure, NDH-1 is composed of 14 different subunits. Subunits NuoB, C, D, E, F, and G constitute the peripheral sector of the complex.

The protein localises to the cell inner membrane. The catalysed reaction is a quinone + NADH + 5 H(+)(in) = a quinol + NAD(+) + 4 H(+)(out). Its function is as follows. NDH-1 shuttles electrons from NADH, via FMN and iron-sulfur (Fe-S) centers, to quinones in the respiratory chain. The immediate electron acceptor for the enzyme in this species is believed to be ubiquinone. Couples the redox reaction to proton translocation (for every two electrons transferred, four hydrogen ions are translocated across the cytoplasmic membrane), and thus conserves the redox energy in a proton gradient. The chain is NADH-quinone oxidoreductase subunit D from Orientia tsutsugamushi (strain Boryong) (Rickettsia tsutsugamushi).